The primary structure comprises 238 residues: Aspartate/glutamate leucyltransferase (238 aa).

The protein belongs to the R-transferase family. Bpt subfamily.

It localises to the cytoplasm. The enzyme catalyses N-terminal L-glutamyl-[protein] + L-leucyl-tRNA(Leu) = N-terminal L-leucyl-L-glutamyl-[protein] + tRNA(Leu) + H(+). It catalyses the reaction N-terminal L-aspartyl-[protein] + L-leucyl-tRNA(Leu) = N-terminal L-leucyl-L-aspartyl-[protein] + tRNA(Leu) + H(+). Its function is as follows. Functions in the N-end rule pathway of protein degradation where it conjugates Leu from its aminoacyl-tRNA to the N-termini of proteins containing an N-terminal aspartate or glutamate. In Aeromonas salmonicida (strain A449), this protein is Aspartate/glutamate leucyltransferase.